The chain runs to 155 residues: DNA-directed RNA polymerase 1A (155 aa).

The active site involves Asp-88.

It belongs to the phage and mitochondrial RNA polymerase family.

It catalyses the reaction RNA(n) + a ribonucleoside 5'-triphosphate = RNA(n+1) + diphosphate. Functionally, DNA-dependent RNA polymerase catalyzes the transcription of DNA into RNA using the four ribonucleoside triphosphates as substrates. In Nicotiana tabacum (Common tobacco), this protein is DNA-directed RNA polymerase 1A (RPOT1-SYL).